An 886-amino-acid chain; its full sequence is CRM-domain containing factor CFM3, chloroplastic/mitochondrial (886 aa).

Residues 1–70 constitute a chloroplast and mitochondrion transit peptide; sequence MAAAAMAISP…LDLRPEPSPS (70 aa). 2 disordered regions span residues 56–84 and 269–291; these read RPAS…TSRS and TKGT…PPGH. CRM domains are found at residues 174 to 270, 378 to 475, and 590 to 690; these read LTLP…EPTK, PSLS…ELAE, and ETIT…SKLR. Polar residues predominate over residues 270 to 281; sequence KGTSKNTQTLGM. The segment at 771–886 is disordered; sequence SFDNSVAVQN…QSTELTNTCS (116 aa). Acidic residues predominate over residues 793–827; sequence NSDDEGDYSDEDDDEDDDNDEEDGFDYENDDEDDV. 2 stretches are compositionally biased toward polar residues: residues 841 to 852 and 869 to 886; these read DFGSSDSENYVS and DSRN…NTCS.

In terms of assembly, interacts with RNA. Part of large ribonucleo-protein particles that contain CAF1 and/or CAF2, and RNC1.

Its subcellular location is the plastid. It localises to the chloroplast. The protein localises to the mitochondrion. Binds specific group II introns in chloroplasts and facilitates their splicing. Acts on subgroup IIB introns. The substrates of the subgroup IIB also require the CRM domain proteins CAF1 or CAF2, with a simultaneous binding of CFM3 and CAF1 or CAF2. May influence the biogenesis of the mitochondrial small ribosomal subunit. This is CRM-domain containing factor CFM3, chloroplastic/mitochondrial from Oryza sativa subsp. japonica (Rice).